Consider the following 799-residue polypeptide: Protein ADP-ribosyltransferase PARP3 (799 aa).

Positions 1-49 are enriched in basic and acidic residues; it reads MKVESRSHNVHHAHGEEEKVMTRKQKAESKAHEVEHSPKKAKVEDEKNG. The segment at 1–55 is disordered; that stretch reads MKVESRSHNVHHAHGEEEKVMTRKQKAESKAHEVEHSPKKAKVEDEKNGHTNGKS. Residues 39–188 form the PADR1 zinc-binding domain; it reads KKAKVEDEKN…QRDLGLAIKP (150 aa). In terms of domain architecture, SAP spans 71–105; sequence NEQLSLEQMKEILEANDLDSSGSDLEITRRCQDLL. Positions 108 to 152 are zinc ribbon; sequence GALEKCMVCNGNMEFDGRRYGCRGFYSEWSSCTFSTREPPRKDEP. Residues Cys113, Cys116, Cys129, and Cys139 each contribute to the Zn(2+) site. The segment at 140–161 is disordered; it reads TFSTREPPRKDEPIKLPDSVQN. Residues 145-154 show a composition bias toward basic and acidic residues; sequence EPPRKDEPIK. One can recognise a BRCT domain in the interval 189–261; sequence FTGMMISLMG…EPQPLESYDL (73 aa). One can recognise a WGR domain in the interval 309–409; that stretch reads DGKIFEKDGI…KKFQKKPLKF (101 aa). Residues 436–555 enclose the PARP alpha-helical domain; that stretch reads HCKLEPMVAN…DITLASHLIG (120 aa). The PARP catalytic domain occupies 564–795; the sequence is DPLSDTYKKL…VKYEEKDAVI (232 aa).

It belongs to the ARTD/PARP family.

The protein localises to the nucleus. It catalyses the reaction L-aspartyl-[protein] + NAD(+) = 4-O-(ADP-D-ribosyl)-L-aspartyl-[protein] + nicotinamide. It carries out the reaction L-glutamyl-[protein] + NAD(+) = 5-O-(ADP-D-ribosyl)-L-glutamyl-[protein] + nicotinamide. Functionally, involved in the base excision repair (BER) pathway, by catalyzing the poly(ADP-ribosyl)ation of a limited number of acceptor proteins involved in chromatin architecture and in DNA metabolism. This modification follows DNA damages and appears as an obligatory step in a detection/signaling pathway leading to the reparation of DNA strand breaks. The protein is Protein ADP-ribosyltransferase PARP3 (PARP3) of Medicago truncatula (Barrel medic).